A 314-amino-acid polypeptide reads, in one-letter code: Ferrochelatase (314 aa).

Fe cation contacts are provided by histidine 184 and glutamate 259.

It belongs to the ferrochelatase family.

The protein localises to the cytoplasm. It carries out the reaction heme b + 2 H(+) = protoporphyrin IX + Fe(2+). The protein operates within porphyrin-containing compound metabolism; protoheme biosynthesis; protoheme from protoporphyrin-IX: step 1/1. In terms of biological role, catalyzes the ferrous insertion into protoporphyrin IX. This chain is Ferrochelatase, found in Chlamydia trachomatis serovar A (strain ATCC VR-571B / DSM 19440 / HAR-13).